The primary structure comprises 192 residues: Ion-translocating oxidoreductase complex subunit B (192 aa).

The interval 1–26 (MNAIWIAVAAVSLLGLAFGAILGYAS) is hydrophobic. One can recognise a 4Fe-4S domain in the interval 32 to 91 (EDDPVVEKIDEILPQSQCGQCGYPGCRPYAEAISCNGEKINRCAPGGEAVMLKIAELLNV). [4Fe-4S] cluster contacts are provided by cysteine 49, cysteine 52, cysteine 57, cysteine 74, cysteine 117, cysteine 120, cysteine 123, cysteine 127, cysteine 147, cysteine 150, cysteine 153, and cysteine 157. 4Fe-4S ferredoxin-type domains lie at 108-137 (MVAVIDENNCIGCTKCIQACPVDAIVGATR) and 138-167 (AMHTVMSDLCTGCNLCVDPCPTHCISLQPV).

This sequence belongs to the 4Fe4S bacterial-type ferredoxin family. RnfB subfamily. As to quaternary structure, the complex is composed of six subunits: RsxA, RsxB, RsxC, RsxD, RsxE and RsxG. It depends on [4Fe-4S] cluster as a cofactor.

It is found in the cell inner membrane. Part of a membrane-bound complex that couples electron transfer with translocation of ions across the membrane. Required to maintain the reduced state of SoxR. The protein is Ion-translocating oxidoreductase complex subunit B of Escherichia coli O127:H6 (strain E2348/69 / EPEC).